The primary structure comprises 185 residues: UPF0397 protein lhv_0999 (185 aa).

Helical transmembrane passes span 11–31 (VVAMGIGSAIYVILTRFTSIP), 45–65 (FLALFAAIYGAKVGFAVGFIG), 72–92 (IMYGQTWWSWVLATGVLGLII), 111–131 (ILLFNIVQIFANIIAWIVVAP), and 145–165 (VFVQGISATLSNGITILVVGT).

Belongs to the UPF0397 family.

The protein localises to the cell membrane. The chain is UPF0397 protein lhv_0999 from Lactobacillus helveticus (strain DPC 4571).